A 226-amino-acid chain; its full sequence is Molybdenum transport system permease protein ModB (226 aa).

The 207-residue stretch at 11–217 (IRLTLELASL…SFLVLFALYS (207 aa)) folds into the ABC transmembrane type-1 domain. A run of 5 helical transmembrane segments spans residues 17–37 (LASL…WWLA), 47–67 (IGAV…FYLL), 88–108 (LPFT…PFVV), 150–170 (ITAA…VLMI), and 197–217 (AHWL…ALYS).

This sequence belongs to the binding-protein-dependent transport system permease family. CysTW subfamily.

The protein localises to the cell inner membrane. Part of the binding-protein-dependent transport system for molybdenum; probably responsible for the translocation of the substrate across the membrane. The polypeptide is Molybdenum transport system permease protein ModB (modB) (Azotobacter vinelandii).